The chain runs to 231 residues: 2-C-methyl-D-erythritol 4-phosphate cytidylyltransferase (231 aa).

This sequence belongs to the IspD/TarI cytidylyltransferase family. IspD subfamily.

The catalysed reaction is 2-C-methyl-D-erythritol 4-phosphate + CTP + H(+) = 4-CDP-2-C-methyl-D-erythritol + diphosphate. It participates in isoprenoid biosynthesis; isopentenyl diphosphate biosynthesis via DXP pathway; isopentenyl diphosphate from 1-deoxy-D-xylulose 5-phosphate: step 2/6. In terms of biological role, catalyzes the formation of 4-diphosphocytidyl-2-C-methyl-D-erythritol from CTP and 2-C-methyl-D-erythritol 4-phosphate (MEP). In Mycobacterium bovis (strain BCG / Pasteur 1173P2), this protein is 2-C-methyl-D-erythritol 4-phosphate cytidylyltransferase.